Consider the following 1048-residue polypeptide: Histone deacetylase complex subunit SAP130 (1048 aa).

The segment at 1–95 is disordered; the sequence is MGPPRHPQAG…LQSREEKQEP (95 aa). Over residues 40 to 54 the composition is skewed to polar residues; sequence TGLSQAPSQIANSGS. Positions 67–80 are enriched in basic and acidic residues; it reads ESGRDSEVSAREHM. Position 232 is an omega-N-methylarginine (R232). T355 bears the Phosphothreonine mark. Phosphoserine is present on residues S442 and S465. Disordered regions lie at residues 458–477, 576–617, and 649–687; these read PISGHRASPNPVAMETRSDN, IGTP…PEGK, and QTHSQSASTNAPAQGSSPRPSILRKKPATDGAKPKSEIH. 2 stretches are compositionally biased toward polar residues: residues 590–613 and 649–667; these read GIHSATPINTQGLQPAPMGTQQPQ and QTHSQSASTNAPAQGSSPR. A Glycyl lysine isopeptide (Lys-Gly) (interchain with G-Cter in SUMO2) cross-link involves residue K785. Residues 819 to 871 are disordered; sequence LSMPTSDLPPGASPRKKPRKQQHVISTEEGDMMETNSTDDEKSTAKSLLVKAE. The segment at 836 to 1047 is interactions with SIN3A and HDAC1; it reads PRKQQHVIST…KVSKLKRKEK (212 aa). A Phosphoserine modification is found at S855. The residue at position 856 (T856) is a Phosphothreonine. Residues K864 and K869 each participate in a glycyl lysine isopeptide (Lys-Gly) (interchain with G-Cter in SUMO2) cross-link. Position 875 is a phosphoserine (S875).

The protein belongs to the SAP130 family. Component of a mSin3A corepressor complex that contains SIN3A, SAP130, SUDS3/SAP45, ARID4B/SAP180, HDAC1 and HDAC2. Interacts (released by dead or dying cells) with CLEC4E. Post-translationally, acetylated. Sumoylated with SUMO1. Expressed in various cancer cell ines.

The protein resides in the nucleus. Its function is as follows. Acts as a transcriptional repressor. May function in the assembly and/or enzymatic activity of the mSin3A corepressor complex or in mediating interactions between the complex and other regulatory complexes. In Homo sapiens (Human), this protein is Histone deacetylase complex subunit SAP130 (SAP130).